Here is a 165-residue protein sequence, read N- to C-terminus: Probable bacterial non-heme ferritin-like protein (165 aa).

The region spanning 1 to 145 (MLSENVVKLL…SILDKLNFLG (145 aa)) is the Ferritin-like diiron domain. Residues glutamate 17, glutamate 50, histidine 53, glutamate 94, and glutamine 127 each contribute to the Fe cation site.

Belongs to the ferritin family. Prokaryotic subfamily.

It is found in the cytoplasm. The sequence is that of Probable bacterial non-heme ferritin-like protein (ftnB) from Haemophilus influenzae (strain ATCC 51907 / DSM 11121 / KW20 / Rd).